The primary structure comprises 359 residues: Fructose-bisphosphate aldolase class 2 (359 aa).

An N6-acetyllysine modification is found at Lys-9. Ser-62 contributes to the D-glyceraldehyde 3-phosphate binding site. Residue Asp-110 is the Proton donor of the active site. The Zn(2+) site is built by His-111, Asp-145, Glu-175, and His-227. Gly-228 lines the dihydroxyacetone phosphate pocket. Residue His-265 coordinates Zn(2+). Dihydroxyacetone phosphate is bound by residues 266-268 and 287-290; these read GGS and NIDT.

The protein belongs to the class II fructose-bisphosphate aldolase family. In terms of assembly, homodimer. It depends on Zn(2+) as a cofactor.

It carries out the reaction beta-D-fructose 1,6-bisphosphate = D-glyceraldehyde 3-phosphate + dihydroxyacetone phosphate. It participates in carbohydrate degradation; glycolysis; D-glyceraldehyde 3-phosphate and glycerone phosphate from D-glucose: step 4/4. Functionally, catalyzes the aldol condensation of dihydroxyacetone phosphate (DHAP or glycerone-phosphate) with glyceraldehyde 3-phosphate (G3P) to form fructose 1,6-bisphosphate (FBP) in gluconeogenesis and the reverse reaction in glycolysis. This is Fructose-bisphosphate aldolase class 2 (fbaA) from Escherichia coli O157:H7.